The chain runs to 948 residues: MAQQYQPGQRWISDSEAELGLGTILAQDGRLLTVLYPATGDTRQYSLRNAPLTRVRFSPGDQITHFEGWKLTVREVEDIDGLMVYHGLDGQNQPRTLPETQLSNFIQFRLASDRLFAGQIDPLSWFSLRYNTLQHTSKQMQSALWGLGGCRAQPIAHQLHIAREVADRSAPRVLLADEVGLGKTIEAGLVIHRQLLSGRASRVLILVPENLQHQWLVEMRRRFNLQVALFDAERFIESDASNPFEDAQLALVALEWLVDDEKAQDALFAAGWDLMVVDEAHHLVWHEDQVSAEYGLVEQLAQVIPGVLLLTATPEQLGQDSHFARLRLLDPNRFHDLAAFRAESEHYRPVAEAVQELLDEGRLSPKAHATILGFLGAEGEALLAAVSDGDTQASARLIRELLDRHGTGRVLFRNTRAAIQGFPERQLHPYPLATPEQYRNLPAGEHAELYPEVAFQAQGEVADDERWWRFDPRVDWLIDTLKMLKRTKVLVICAHAETAMDLEDALRVRSGIPASVFHEGMSILERDRAAAYFADEEFGAQVLICSEIGSEGRNFQFAHHLVMFDLPAHPDLLEQRIGRLDRIGQKHTIQLHIPYLQDSPQERLFQWYHEGLNAFLNTCPTGNALQHQFGPRLLPLLEGGDHKAWDTLVADARSERERLEAELHTGRDRLLELNSGGAGEGQALVEAILEQDDQFALPIYMETLFDAFGIDSEDHSENALILKPSEKMLDASFPLGDDEGVTITYDRGQALSREDMQFLTWEHPMVQGGMDLVLSGSMGNTAVALIKNKALKPGTVLLELLFVSEVVAPRSLQLGRYLPPAALRCLLDANGNDLASRVAFETLNDQLESVPRASANKFVQAQRDVLAKRISGGEEKILPAHNERVAEAQRRLTAEADEELARLVALQAVNPSVRDSEIDALRKRREDGLAMLEKAALRLEAIRVLVAG.

In terms of domain architecture, Helicase ATP-binding spans 164–332 (EVADRSAPRV…FARLRLLDPN (169 aa)). Position 177 to 184 (177 to 184 (DEVGLGKT)) interacts with ATP. The short motif at 278–281 (DEAH) is the DEAH box element. The Helicase C-terminal domain maps to 473–627 (RVDWLIDTLK…TCPTGNALQH (155 aa)).

The protein belongs to the SNF2/RAD54 helicase family. RapA subfamily. Interacts with the RNAP. Has a higher affinity for the core RNAP than for the holoenzyme. Its ATPase activity is stimulated by binding to RNAP.

Transcription regulator that activates transcription by stimulating RNA polymerase (RNAP) recycling in case of stress conditions such as supercoiled DNA or high salt concentrations. Probably acts by releasing the RNAP, when it is trapped or immobilized on tightly supercoiled DNA. Does not activate transcription on linear DNA. Probably not involved in DNA repair. The chain is RNA polymerase-associated protein RapA from Pseudomonas putida (strain ATCC 700007 / DSM 6899 / JCM 31910 / BCRC 17059 / LMG 24140 / F1).